We begin with the raw amino-acid sequence, 99 residues long: CLAVATA3/ESR (CLE)-related protein 11 (99 aa).

An N-terminal signal peptide occupies residues 1–31 (MTKQPKPCSFLFHISLLSALFVFLLISFAFT). Hydroxyproline occurs at positions 91 and 94. Residue Pro94 is glycosylated (O-linked (Ara...) hydroxyproline).

It belongs to the CLV3/ESR signal peptide family. In terms of processing, the O-glycosylation (arabinosylation) of the hydroxyproline Pro-94 enhances binding affinity of the CLE11p peptide for its receptor. As to expression, mostly expressed in seedlings, roots and siliques, and, to a lower extent, in leaves, flowers, stems and apex.

The protein resides in the secreted. The protein localises to the extracellular space. Extracellular signal peptide that regulates cell fate. Represses root apical meristem maintenance. Regulates the transition of protophloem cells from proliferation to differentiation, thus impinging on postembryonic growth capacity of the root meristem; this signaling pathway requires CRN and CLV2. In Arabidopsis thaliana (Mouse-ear cress), this protein is CLAVATA3/ESR (CLE)-related protein 11.